Reading from the N-terminus, the 352-residue chain is UDP-N-acetylglucosamine--N-acetylmuramyl-(pentapeptide) pyrophosphoryl-undecaprenol N-acetylglucosamine transferase (352 aa).

S195 and Q287 together coordinate UDP-N-acetyl-alpha-D-glucosamine.

It belongs to the glycosyltransferase 28 family. MurG subfamily.

It localises to the cell membrane. It catalyses the reaction Mur2Ac(oyl-L-Ala-gamma-D-Glu-L-Lys-D-Ala-D-Ala)-di-trans,octa-cis-undecaprenyl diphosphate + UDP-N-acetyl-alpha-D-glucosamine = beta-D-GlcNAc-(1-&gt;4)-Mur2Ac(oyl-L-Ala-gamma-D-Glu-L-Lys-D-Ala-D-Ala)-di-trans,octa-cis-undecaprenyl diphosphate + UDP + H(+). It functions in the pathway cell wall biogenesis; peptidoglycan biosynthesis. Functionally, cell wall formation. Catalyzes the transfer of a GlcNAc subunit on undecaprenyl-pyrophosphoryl-MurNAc-pentapeptide (lipid intermediate I) to form undecaprenyl-pyrophosphoryl-MurNAc-(pentapeptide)GlcNAc (lipid intermediate II). The polypeptide is UDP-N-acetylglucosamine--N-acetylmuramyl-(pentapeptide) pyrophosphoryl-undecaprenol N-acetylglucosamine transferase (Streptococcus pneumoniae (strain CGSP14)).